The following is a 129-amino-acid chain: Small ribosomal subunit protein bS6 (129 aa).

It belongs to the bacterial ribosomal protein bS6 family.

Binds together with bS18 to 16S ribosomal RNA. The polypeptide is Small ribosomal subunit protein bS6 (Pelobacter propionicus (strain DSM 2379 / NBRC 103807 / OttBd1)).